The sequence spans 704 residues: Protein NPG1 (704 aa).

TPR repeat units follow at residues 24 to 57 (NGIC…SLNF), 58 to 90 (EEAR…QAAI), 177 to 210 (SHAV…QWNL), 309 to 342 (IERW…HEQP), 430 to 463 (PDLI…TGGS), 555 to 588 (FEVW…KQYS), 589 to 622 (ASML…DGSS), and 662 to 695 (RKAW…EESD).

In terms of assembly, interacts with calmodulin in a calcium-dependent manner. As to expression, expressed only in pollen and in pollen tubes.

Calmodulin-binding protein essential for pollen germination, but not necessary for microsporogenesis or gametogenesis. The polypeptide is Protein NPG1 (Arabidopsis thaliana (Mouse-ear cress)).